Consider the following 526-residue polypeptide: Bifunctional purine biosynthesis protein PurH (526 aa).

One can recognise an MGS-like domain in the interval 1–147 (MPSIKRALIS…KNWKHVAIVT (147 aa)).

It belongs to the PurH family.

It carries out the reaction (6R)-10-formyltetrahydrofolate + 5-amino-1-(5-phospho-beta-D-ribosyl)imidazole-4-carboxamide = 5-formamido-1-(5-phospho-D-ribosyl)imidazole-4-carboxamide + (6S)-5,6,7,8-tetrahydrofolate. The catalysed reaction is IMP + H2O = 5-formamido-1-(5-phospho-D-ribosyl)imidazole-4-carboxamide. Its pathway is purine metabolism; IMP biosynthesis via de novo pathway; 5-formamido-1-(5-phospho-D-ribosyl)imidazole-4-carboxamide from 5-amino-1-(5-phospho-D-ribosyl)imidazole-4-carboxamide (10-formyl THF route): step 1/1. It participates in purine metabolism; IMP biosynthesis via de novo pathway; IMP from 5-formamido-1-(5-phospho-D-ribosyl)imidazole-4-carboxamide: step 1/1. This Neisseria meningitidis serogroup C / serotype 2a (strain ATCC 700532 / DSM 15464 / FAM18) protein is Bifunctional purine biosynthesis protein PurH.